A 912-amino-acid polypeptide reads, in one-letter code: LPS-assembly protein LptD (912 aa).

The signal sequence occupies residues 1–27; that stretch reads MLYSPLYQSIRLILFGALGLSSLTVSA.

It belongs to the LptD family. Component of the lipopolysaccharide transport and assembly complex. Interacts with LptE and LptA.

It localises to the cell outer membrane. Functionally, together with LptE, is involved in the assembly of lipopolysaccharide (LPS) at the surface of the outer membrane. This Psychrobacter arcticus (strain DSM 17307 / VKM B-2377 / 273-4) protein is LPS-assembly protein LptD.